A 203-amino-acid chain; its full sequence is Holliday junction branch migration complex subunit RuvA (203 aa).

Residues 1–64 are domain I; it reads MIGRLRGYIL…EDAQLLYGFN (64 aa). Positions 65–142 are domain II; the sequence is DKQERALFRE…KGLNGDLFNN (78 aa). Residues 143 to 154 are flexible linker; the sequence is SSEITLPTAAQA. Positions 155 to 203 are domain III; the sequence is AELDAEAEAASALVALGYKPQEASRMVSKIAKPGADCETLIRDALRAAL.

This sequence belongs to the RuvA family. In terms of assembly, homotetramer. Forms an RuvA(8)-RuvB(12)-Holliday junction (HJ) complex. HJ DNA is sandwiched between 2 RuvA tetramers; dsDNA enters through RuvA and exits via RuvB. An RuvB hexamer assembles on each DNA strand where it exits the tetramer. Each RuvB hexamer is contacted by two RuvA subunits (via domain III) on 2 adjacent RuvB subunits; this complex drives branch migration. In the full resolvosome a probable DNA-RuvA(4)-RuvB(12)-RuvC(2) complex forms which resolves the HJ.

Its subcellular location is the cytoplasm. Functionally, the RuvA-RuvB-RuvC complex processes Holliday junction (HJ) DNA during genetic recombination and DNA repair, while the RuvA-RuvB complex plays an important role in the rescue of blocked DNA replication forks via replication fork reversal (RFR). RuvA specifically binds to HJ cruciform DNA, conferring on it an open structure. The RuvB hexamer acts as an ATP-dependent pump, pulling dsDNA into and through the RuvAB complex. HJ branch migration allows RuvC to scan DNA until it finds its consensus sequence, where it cleaves and resolves the cruciform DNA. This is Holliday junction branch migration complex subunit RuvA from Serratia proteamaculans (strain 568).